Here is a 186-residue protein sequence, read N- to C-terminus: Ribosome-recycling factor (186 aa).

It belongs to the RRF family.

The protein resides in the cytoplasm. Responsible for the release of ribosomes from messenger RNA at the termination of protein biosynthesis. May increase the efficiency of translation by recycling ribosomes from one round of translation to another. The protein is Ribosome-recycling factor of Rickettsia africae (strain ESF-5).